Consider the following 479-residue polypeptide: Ubiquinone biosynthesis monooxygenase COQ6, mitochondrial (479 aa).

It belongs to the UbiH/COQ6 family. Component of a multi-subunit COQ enzyme complex, composed of at least COQ3, COQ4, COQ5, COQ6, COQ7 and COQ9. Requires FAD as cofactor.

The protein resides in the mitochondrion inner membrane. It catalyses the reaction 4-hydroxy-3-(all-trans-decaprenyl)benzoate + 2 reduced [2Fe-2S]-[ferredoxin] + O2 + 2 H(+) = 3,4-dihydroxy-5-(all-trans-decaprenyl)benzoate + 2 oxidized [2Fe-2S]-[ferredoxin] + H2O. The enzyme catalyses 2-methoxy-6-(all-trans-decaprenyl)phenol + 2 reduced [2Fe-2S]-[ferredoxin] + O2 + 2 H(+) = 2-methoxy-6-(all-trans-decaprenyl)benzene-1,4-diol + 2 oxidized [2Fe-2S]-[ferredoxin] + H2O. Its pathway is cofactor biosynthesis; ubiquinone biosynthesis. Functionally, FAD-dependent monooxygenase required for two non-consecutive steps during ubiquinone biosynthesis. Required for the C5-ring hydroxylation during ubiquinone biosynthesis by catalyzing the hydroxylation of 4-hydroxy-3-(all-trans-decaprenyl)benzoic acid to 3,4-dihydroxy-5-(all-trans-decaprenyl)benzoic acid. Also acts downstream of COQ4, for the C1-hydroxylation during ubiquinone biosynthesis by catalyzing the hydroxylation of 2-methoxy-6-(all-trans-decaprenyl)phenol to 2-methoxy-6-(all-trans-decaprenyl)benzene-1,4-diol. The electrons required for the hydroxylation reaction are funneled indirectly to coq6 from NADPH via a ferredoxin/ferredoxin reductase system. The polypeptide is Ubiquinone biosynthesis monooxygenase COQ6, mitochondrial (Schizosaccharomyces pombe (strain 972 / ATCC 24843) (Fission yeast)).